The following is a 483-amino-acid chain: Scarecrow-like protein 26 (483 aa).

The GRAS domain occupies 95-477; that stretch reads KTDESKGLRL…RRLVSASFWA (383 aa). The leucine repeat I (LRI) stretch occupies residues 102-165; sequence LRLVHLLVAA…SKLLERDSVL (64 aa). Residues 184–251 form a VHIID region; the sequence is FELLQNMSPY…PSAQHLRITA (68 aa). Residues 215–219 carry the VHIID motif; it reads IHIVD. A leucine repeat II (LRII) region spans residues 267–299; the sequence is ETGRRLTAFADSIGQPFSYQHCKLDTNAFSTSS. Positions 308 to 400 are PFYRE; sequence VVINCMLHLP…RVFIGPWVAN (93 aa). The tract at residues 403–477 is SAW; that stretch reads TRITANDAEV…RRLVSASFWA (75 aa).

It belongs to the GRAS family. Expressed in seedlings, roots, leaves and flowers.

Its subcellular location is the nucleus. In terms of biological role, probable transcription factor involved in plant development. The protein is Scarecrow-like protein 26 (SCL26) of Arabidopsis thaliana (Mouse-ear cress).